We begin with the raw amino-acid sequence, 263 residues long: 4-hydroxy-tetrahydrodipicolinate reductase (263 aa).

Residues 8–13 (GACGKM), Asp34, 97–99 (GTT), and 123–126 (APNF) each bind NAD(+). His153 serves as the catalytic Proton donor/acceptor. His154 lines the (S)-2,3,4,5-tetrahydrodipicolinate pocket. Residue Lys157 is the Proton donor of the active site. 163–164 (GT) contributes to the (S)-2,3,4,5-tetrahydrodipicolinate binding site.

Belongs to the DapB family.

It is found in the cytoplasm. It carries out the reaction (S)-2,3,4,5-tetrahydrodipicolinate + NAD(+) + H2O = (2S,4S)-4-hydroxy-2,3,4,5-tetrahydrodipicolinate + NADH + H(+). The catalysed reaction is (S)-2,3,4,5-tetrahydrodipicolinate + NADP(+) + H2O = (2S,4S)-4-hydroxy-2,3,4,5-tetrahydrodipicolinate + NADPH + H(+). The protein operates within amino-acid biosynthesis; L-lysine biosynthesis via DAP pathway; (S)-tetrahydrodipicolinate from L-aspartate: step 4/4. Its function is as follows. Catalyzes the conversion of 4-hydroxy-tetrahydrodipicolinate (HTPA) to tetrahydrodipicolinate. In Carboxydothermus hydrogenoformans (strain ATCC BAA-161 / DSM 6008 / Z-2901), this protein is 4-hydroxy-tetrahydrodipicolinate reductase.